A 301-amino-acid polypeptide reads, in one-letter code: Probable alpha-L-glutamate ligase (301 aa).

In terms of domain architecture, ATP-grasp spans 104-287 (LQLLSRKGIG…VAGMIIQYLE (184 aa)). ATP-binding positions include Lys-141, 178 to 179 (EY), Asp-187, and 211 to 213 (RSN). Positions 248, 260, and 262 each coordinate Mg(2+). Positions 248, 260, and 262 each coordinate Mn(2+).

It belongs to the RimK family. Mg(2+) serves as cofactor. Requires Mn(2+) as cofactor.

The sequence is that of Probable alpha-L-glutamate ligase from Ectopseudomonas mendocina (strain ymp) (Pseudomonas mendocina).